Consider the following 349-residue polypeptide: Ferredoxin--NADP reductase 3 (349 aa).

Positions 34, 42, 46, 86, 120, 287, and 328 each coordinate FAD.

It belongs to the ferredoxin--NADP reductase type 2 family. Homodimer. The cofactor is FAD.

It carries out the reaction 2 reduced [2Fe-2S]-[ferredoxin] + NADP(+) + H(+) = 2 oxidized [2Fe-2S]-[ferredoxin] + NADPH. The sequence is that of Ferredoxin--NADP reductase 3 from Lysinibacillus sphaericus (strain C3-41).